Here is a 199-residue protein sequence, read N- to C-terminus: Potassium-transporting ATPase KdpC subunit 2 (199 aa).

Residues 13 to 33 traverse the membrane as a helical segment; sequence ITLIFWLVTAIIYPLAILVVG.

This sequence belongs to the KdpC family. As to quaternary structure, the system is composed of three essential subunits: KdpA, KdpB and KdpC.

It is found in the cell inner membrane. Part of the high-affinity ATP-driven potassium transport (or Kdp) system, which catalyzes the hydrolysis of ATP coupled with the electrogenic transport of potassium into the cytoplasm. This subunit acts as a catalytic chaperone that increases the ATP-binding affinity of the ATP-hydrolyzing subunit KdpB by the formation of a transient KdpB/KdpC/ATP ternary complex. The polypeptide is Potassium-transporting ATPase KdpC subunit 2 (Nostoc sp. (strain PCC 7120 / SAG 25.82 / UTEX 2576)).